A 361-amino-acid chain; its full sequence is ATP-dependent 6-phosphofructokinase 1 (361 aa).

Residues Gly14, Lys79 to Gly80, and Gly116 to Ser119 contribute to the ATP site. Position 117 (Asp117) interacts with Mg(2+). Residues Thr140–Asp142, Arg177, Met184–Arg186, Glu237, Arg278, and His284–Arg287 each bind substrate. The active-site Proton acceptor is Asp142.

The protein belongs to the phosphofructokinase type A (PFKA) family. Mixed-substrate PFK group III subfamily. As to quaternary structure, homodimer or homotetramer. Requires Mg(2+) as cofactor.

The protein resides in the cytoplasm. The catalysed reaction is beta-D-fructose 6-phosphate + ATP = beta-D-fructose 1,6-bisphosphate + ADP + H(+). The protein operates within carbohydrate degradation; glycolysis; D-glyceraldehyde 3-phosphate and glycerone phosphate from D-glucose: step 3/4. Catalyzes the phosphorylation of D-fructose 6-phosphate to fructose 1,6-bisphosphate by ATP, the first committing step of glycolysis. This Synechocystis sp. (strain ATCC 27184 / PCC 6803 / Kazusa) protein is ATP-dependent 6-phosphofructokinase 1.